We begin with the raw amino-acid sequence, 272 residues long: 1,4-dihydroxy-2-naphthoyl-CoA synthase (272 aa).

Substrate-binding positions include arginine 33, 72–76 (SGGDQ), tyrosine 84, 116–120 (YAIGG), threonine 142, serine 148, tyrosine 245, and lysine 260. Position 141–143 (141–143 (QTG)) interacts with hydrogencarbonate.

The protein belongs to the enoyl-CoA hydratase/isomerase family. MenB subfamily. Requires hydrogencarbonate as cofactor.

It catalyses the reaction 2-succinylbenzoyl-CoA + H(+) = 1,4-dihydroxy-2-naphthoyl-CoA + H2O. Its pathway is quinol/quinone metabolism; 1,4-dihydroxy-2-naphthoate biosynthesis; 1,4-dihydroxy-2-naphthoate from chorismate: step 6/7. It functions in the pathway quinol/quinone metabolism; menaquinone biosynthesis. Functionally, converts o-succinylbenzoyl-CoA (OSB-CoA) to 1,4-dihydroxy-2-naphthoyl-CoA (DHNA-CoA). This is 1,4-dihydroxy-2-naphthoyl-CoA synthase from Staphylococcus epidermidis (strain ATCC 12228 / FDA PCI 1200).